Here is a 164-residue protein sequence, read N- to C-terminus: Phosphohistidine phosphatase SixA homolog (164 aa).

Belongs to the SixA phosphatase family.

This Haemophilus influenzae (strain ATCC 51907 / DSM 11121 / KW20 / Rd) protein is Phosphohistidine phosphatase SixA homolog (sixA-A).